Reading from the N-terminus, the 332-residue chain is Glycerol-3-phosphate dehydrogenase [NAD(P)+] (332 aa).

Positions 11, 12, 32, and 106 each coordinate NADPH. 3 residues coordinate sn-glycerol 3-phosphate: lysine 106, glycine 137, and serine 139. Alanine 141 is an NADPH binding site. Positions 192, 245, 255, 256, and 257 each coordinate sn-glycerol 3-phosphate. Lysine 192 serves as the catalytic Proton acceptor. Arginine 256 serves as a coordination point for NADPH. NADPH-binding residues include valine 280 and glutamate 282.

It belongs to the NAD-dependent glycerol-3-phosphate dehydrogenase family.

It is found in the cytoplasm. The enzyme catalyses sn-glycerol 3-phosphate + NAD(+) = dihydroxyacetone phosphate + NADH + H(+). It catalyses the reaction sn-glycerol 3-phosphate + NADP(+) = dihydroxyacetone phosphate + NADPH + H(+). It functions in the pathway membrane lipid metabolism; glycerophospholipid metabolism. Catalyzes the reduction of the glycolytic intermediate dihydroxyacetone phosphate (DHAP) to sn-glycerol 3-phosphate (G3P), the key precursor for phospholipid synthesis. The chain is Glycerol-3-phosphate dehydrogenase [NAD(P)+] from Staphylococcus carnosus (strain TM300).